We begin with the raw amino-acid sequence, 89 residues long: Exodeoxyribonuclease 7 small subunit (89 aa).

The interval 1–22 (MRKKSSSNKEETALHPPPENFE) is disordered.

It belongs to the XseB family. As to quaternary structure, heterooligomer composed of large and small subunits.

It is found in the cytoplasm. It carries out the reaction Exonucleolytic cleavage in either 5'- to 3'- or 3'- to 5'-direction to yield nucleoside 5'-phosphates.. Its function is as follows. Bidirectionally degrades single-stranded DNA into large acid-insoluble oligonucleotides, which are then degraded further into small acid-soluble oligonucleotides. The chain is Exodeoxyribonuclease 7 small subunit from Nitrosomonas europaea (strain ATCC 19718 / CIP 103999 / KCTC 2705 / NBRC 14298).